We begin with the raw amino-acid sequence, 96 residues long: Protein RnfH (96 aa).

It belongs to the UPF0125 (RnfH) family.

This chain is Protein RnfH, found in Cronobacter sakazakii (strain ATCC BAA-894) (Enterobacter sakazakii).